The following is a 173-amino-acid chain: Alpha-crystallin A chain (173 aa).

N-acetylmethionine is present on M1. A required for complex formation with BFSP1 and BFSP2 region spans residues 1-63; that stretch reads MDIAIQHPWF…RSVLDSGISE (63 aa). Q6 bears the Deamidated glutamine; partial mark. S45 is modified (phosphoserine). Deamidated glutamine; partial is present on Q50. The sHSP domain maps to 52 to 162; the sequence is VFRSVLDSGI…GHSERAIPVS (111 aa). N6-acetyllysine is present on residues K70 and K99. H100 contacts Zn(2+). Residue N101 is modified to Deamidated asparagine; partial. Residues E102 and H107 each contribute to the Zn(2+) site. Residue S122 is modified to Phosphoserine. N123 carries the post-translational modification Deamidated asparagine; partial. Residues 144–173 form a disordered region; that stretch reads PKVPSGVDAGHSERAIPVSREEKPSSAPSS. Positions 153 to 167 are enriched in basic and acidic residues; the sequence is GHSERAIPVSREEKP. H154 contributes to the Zn(2+) binding site. A glycan (O-linked (GlcNAc) serine) is linked at S162.

This sequence belongs to the small heat shock protein (HSP20) family. In terms of assembly, heteromer composed of three CRYAA and one CRYAB subunits. Inter-subunit bridging via zinc ions enhances stability, which is crucial as there is no protein turn over in the lens. Can also form homodimers and homotetramers (dimers of dimers) which serve as the building blocks of homooligomers. Within homooligomers, the zinc-binding motif is created from residues of 3 different molecules. His-100 and Glu-102 from one molecule are ligands of the zinc ion, and His-107 and His-154 residues from additional molecules complete the site with tetrahedral coordination geometry. Part of a complex required for lens intermediate filament formation composed of BFSP1, BFSP2 and CRYAA. Post-translationally, acetylation at Lys-70 may increase chaperone activity. Undergoes age-dependent proteolytical cleavage at the C-terminus.

It localises to the cytoplasm. Its subcellular location is the nucleus. Functionally, contributes to the transparency and refractive index of the lens. Acts as a chaperone, preventing aggregation of various proteins under a wide range of stress conditions. Required for the correct formation of lens intermediate filaments as part of a complex composed of BFSP1, BFSP2 and CRYAA. The polypeptide is Alpha-crystallin A chain (CRYAA) (Halichoerus grypus (Gray seal)).